The following is a 114-amino-acid chain: Large ribosomal subunit protein uL22 (114 aa).

This sequence belongs to the universal ribosomal protein uL22 family. In terms of assembly, part of the 50S ribosomal subunit.

In terms of biological role, this protein binds specifically to 23S rRNA; its binding is stimulated by other ribosomal proteins, e.g. L4, L17, and L20. It is important during the early stages of 50S assembly. It makes multiple contacts with different domains of the 23S rRNA in the assembled 50S subunit and ribosome. The globular domain of the protein is located near the polypeptide exit tunnel on the outside of the subunit, while an extended beta-hairpin is found that lines the wall of the exit tunnel in the center of the 70S ribosome. The polypeptide is Large ribosomal subunit protein uL22 (Streptococcus agalactiae serotype Ia (strain ATCC 27591 / A909 / CDC SS700)).